Here is a 140-residue protein sequence, read N- to C-terminus: MLEIDNQTPLESDFLSLEKIANVLAPTQTIELVLVSDETMREINRDSRGCDYATDVLSFPLEAIPHTPLGSVVINMPLAQESALKLGHRLEDEIALLFIHGVLHLLGYDHEKDKGEQRQKESELIKTFNLPLSLIERAQD.

Histidine 100, histidine 104, and histidine 110 together coordinate Zn(2+).

This sequence belongs to the endoribonuclease YbeY family. Requires Zn(2+) as cofactor.

The protein resides in the cytoplasm. Its function is as follows. Single strand-specific metallo-endoribonuclease involved in late-stage 70S ribosome quality control and in maturation of the 3' terminus of the 16S rRNA. The chain is Endoribonuclease YbeY from Helicobacter pylori (strain Shi470).